A 58-amino-acid polypeptide reads, in one-letter code: UPF0391 membrane protein Patl_4137 (58 aa).

The next 2 membrane-spanning stretches (helical) occupy residues 4-24 (WALT…GGIA) and 27-47 (AAGI…LSLV).

It belongs to the UPF0391 family.

It is found in the cell membrane. This is UPF0391 membrane protein Patl_4137 from Pseudoalteromonas atlantica (strain T6c / ATCC BAA-1087).